Here is a 75-residue protein sequence, read N- to C-terminus: Large ribosomal subunit protein bL28 (75 aa).

Belongs to the bacterial ribosomal protein bL28 family.

This is Large ribosomal subunit protein bL28 from Buchnera aphidicola subsp. Acyrthosiphon pisum (strain APS) (Acyrthosiphon pisum symbiotic bacterium).